The primary structure comprises 48 residues: DNA-directed RNA polymerase subunit Rpo12 (48 aa).

C6, C9, C26, and C29 together coordinate Zn(2+).

The protein belongs to the archaeal Rpo12/eukaryotic RPC10 RNA polymerase subunit family. In terms of assembly, part of the 13-subunit RNA polymerase. Zn(2+) serves as cofactor.

It localises to the cytoplasm. The catalysed reaction is RNA(n) + a ribonucleoside 5'-triphosphate = RNA(n+1) + diphosphate. DNA-dependent RNA polymerase (RNAP) catalyzes the transcription of DNA into RNA using the four ribonucleoside triphosphates as substrates. The protein is DNA-directed RNA polymerase subunit Rpo12 of Sulfolobus acidocaldarius (strain ATCC 33909 / DSM 639 / JCM 8929 / NBRC 15157 / NCIMB 11770).